The chain runs to 396 residues: MNEAVIDPILETAVNTGDMFCSQTIPNRCLKDTILIEVQPECADTLQCVLDDKVSRHQPLLLRNHKKLELPSEKSVTRGGFYMQQLELLVKSAPPNEYALLLIQCKDTALADEDNFFVANGVIDAGYRGVISALLYYRPGVTVILPGHLTIYLFPVKLRQSRLLPKNVLKHLDPIFKSIQVQPLSNSPSNYEKPVIPEFADISTVQQGQPLHRDSAEYHIDVPLTYKHIINPKRQEDAGYDICVPYNLYLKRNEFIKIVLPIIRDWDLQHPSINAYIFGRSSKSRSGIIVCPTAWPAGEHCKFYVYNLTGDDIRIKTGDRLAQVLLIDHNTQIHLKHNVLSNIAFPYAIRGKCGIPGVQWYFTKTLDLIATPSERGTRGFGSTDKETNDVDFLLKH.

Substrate-binding positions include 280-282 (RSS) and 380-381 (FG).

Belongs to the dUTPase family. Requires Mg(2+) as cofactor.

The enzyme catalyses dUTP + H2O = dUMP + diphosphate + H(+). Its function is as follows. Involved in nucleotide metabolism: produces dUMP, the immediate precursor of thymidine nucleotides and decreases the intracellular concentration of dUTP to avoid uracil incorporation into viral DNA. The chain is Deoxyuridine 5'-triphosphate nucleotidohydrolase from Varicella-zoster virus (strain Dumas) (HHV-3).